A 175-amino-acid chain; its full sequence is MAGKTMIPLLAFAAWSGTGKTTLLKKLIPALCARGIRPGLIKHTHHDMDVDKPGKDSYELRKAGAAQTIVASQQRWALMTETPDEEELDLQFLASRMDTSKLDLILVEGFKHEEIAKIVLFRDGAGHRPEELVIDRHVIAVASDVPLNLDVALLDINDVEGLADFVVEWMQKQNG.

Residues 17–21 (GTGKT), 51–54 (DKPG), and 100–103 (SKLD) contribute to the GTP site.

Belongs to the MobB family. In terms of assembly, homodimer. Interacts with MobA, MogA and MoeA in vivo.

GTP-binding protein that is not required for the biosynthesis of Mo-molybdopterin guanine dinucleotide (Mo-MGD) cofactor, and not necessary for the formation of active molybdoenzymes using this form of molybdenum cofactor. May act as an adapter protein to achieve the efficient biosynthesis and utilization of MGD. Displays a weak intrinsic GTPase activity. Is also able to bind the nucleotides ATP, TTP and GDP, but with lower affinity than GTP. This Escherichia coli (strain K12) protein is Molybdopterin-guanine dinucleotide biosynthesis adapter protein (mobB).